Here is a 215-residue protein sequence, read N- to C-terminus: uncharacterized protein (215 aa).

Catalysis depends on charge relay system residues S114, D162, and H194.

It belongs to the AB hydrolase superfamily. AB hydrolase 2 family.

This is an uncharacterized protein from Rickettsia felis (strain ATCC VR-1525 / URRWXCal2) (Rickettsia azadi).